The primary structure comprises 467 residues: Polygalacturonase (467 aa).

Positions 1–27 (MALQRRFFQFVIITLLIPSFILGYTSA) are cleaved as a signal peptide. The active-site Proton donor is the Asp283. Asn290 carries an N-linked (GlcNAc...) asparagine glycan. His306 is an active-site residue.

The protein belongs to the glycosyl hydrolase 28 family.

It is found in the secreted. It localises to the cell wall. The enzyme catalyses (1,4-alpha-D-galacturonosyl)n+m + H2O = (1,4-alpha-D-galacturonosyl)n + (1,4-alpha-D-galacturonosyl)m.. In terms of biological role, acts in concert with the pectinesterase, in the ripening process. Is involved in cell wall metabolism, specifically in polyuronide degradation. This Actinidia deliciosa (Kiwi) protein is Polygalacturonase.